We begin with the raw amino-acid sequence, 723 residues long: Epidermal growth factor receptor kinase substrate 8-like protein 1 (723 aa).

Residues 35 to 164 (QYPVNHLVTF…LHNYRSGRGE (130 aa)) enclose the PTB domain. Residues 162–183 (RGERRAAALRATQEELQRDRSP) are compositionally biased toward basic and acidic residues. Disordered stretches follow at residues 162–247 (RGER…PRGP), 442–477 (KQLQHERRRRQQSAPQVAVNGHRDLEPESEPQLESE), 537–589 (GPRL…GLDP), and 609–636 (LAQGRSGPSRAVPGPRAPEPQLSPGSDA). Phosphoserine is present on Ser-182. Thr-187 carries the post-translational modification Phosphothreonine. Positions 478–537 (TAGKWVLCNYDFQARNSSELSVKQRDVLEVLDDSRKWWKVRDPAGQEGYVPYNILTPYPG) constitute an SH3 domain. The span at 543-552 (SQSPARSLNS) shows a compositional bias: polar residues. Positions 553 to 568 (TPPPPPAPAPAPPPAL) are enriched in pro residues. Over residues 571-580 (PRWDRPRWDS) the composition is skewed to basic and acidic residues. Positions 689–719 (VQRSLLEDKEKVSELEAVMEKQKKKVEGEVE) form a coiled coil.

This sequence belongs to the EPS8 family. Interacts with ABI1. Part of a complex that contains SOS1, ABI1 and EPS8L2. Associates with F-actin. Detected in placenta.

The protein resides in the cytoplasm. Its function is as follows. Stimulates guanine exchange activity of SOS1. May play a role in membrane ruffling and remodeling of the actin cytoskeleton. The sequence is that of Epidermal growth factor receptor kinase substrate 8-like protein 1 (EPS8L1) from Homo sapiens (Human).